A 146-amino-acid chain; its full sequence is Ribonuclease H (146 aa).

One can recognise an RNase H type-1 domain in the interval 1-141 (MKKVQLITDG…CDELATRAAR (141 aa)). Mg(2+)-binding residues include Asp-9, Glu-47, Asp-69, and Asp-133.

Belongs to the RNase H family. As to quaternary structure, monomer. Requires Mg(2+) as cofactor.

It is found in the cytoplasm. It carries out the reaction Endonucleolytic cleavage to 5'-phosphomonoester.. Functionally, endonuclease that specifically degrades the RNA of RNA-DNA hybrids. This Solibacter usitatus (strain Ellin6076) protein is Ribonuclease H.